Consider the following 156-residue polypeptide: Small ribosomal subunit protein uS7 (156 aa).

The protein belongs to the universal ribosomal protein uS7 family. Part of the 30S ribosomal subunit. Contacts proteins S9 and S11.

In terms of biological role, one of the primary rRNA binding proteins, it binds directly to 16S rRNA where it nucleates assembly of the head domain of the 30S subunit. Is located at the subunit interface close to the decoding center, probably blocks exit of the E-site tRNA. This is Small ribosomal subunit protein uS7 from Buchnera aphidicola subsp. Acyrthosiphon pisum (strain Tuc7).